A 287-amino-acid chain; its full sequence is ATP synthase gamma chain (287 aa).

It belongs to the ATPase gamma chain family. As to quaternary structure, F-type ATPases have 2 components, CF(1) - the catalytic core - and CF(0) - the membrane proton channel. CF(1) has five subunits: alpha(3), beta(3), gamma(1), delta(1), epsilon(1). CF(0) has three main subunits: a, b and c.

The protein resides in the cell inner membrane. Its function is as follows. Produces ATP from ADP in the presence of a proton gradient across the membrane. The gamma chain is believed to be important in regulating ATPase activity and the flow of protons through the CF(0) complex. The sequence is that of ATP synthase gamma chain from Citrobacter koseri (strain ATCC BAA-895 / CDC 4225-83 / SGSC4696).